The chain runs to 178 residues: Fatty-acid and retinol-binding protein 1 (178 aa).

Residues 1-16 (MYHRLILLALIGTTMA) form the signal peptide. Coiled-coil stretches lie at residues 67–89 (DAALEALKAKSDNLYKNAVELRN) and 130–153 (KQAARDIIAKYQALSEETKEELKV).

Belongs to the fatty-acid and retinol-binding protein (FARBP) family. Not glycosylated.

Its subcellular location is the secreted. In terms of biological role, binds retinol and different fatty acids. The chain is Fatty-acid and retinol-binding protein 1 from Wuchereria bancrofti.